The sequence spans 302 residues: Ribosome-binding factor PSRP1, chloroplastic (302 aa).

A chloroplast-targeting transit peptide spans Met-1 to Met-66.

As to quaternary structure, binds to the mRNA channel of the chloroplast small ribosomal subunit and interacts with 16S sRNA nucleotides at the A-site and P-site.

It localises to the plastid. The protein resides in the chloroplast stroma. Ribosome-binding factor involved in light- and temperature-dependent control of protein synthesis. Interacts with 16S sRNA nucleotides at the A-site and P-site, where it protects the decoding center and inhibits translation by preventing tRNA binding. Stabilizes 70S ribosomes against dissociation. May be recycled by the combined action of ribosome-recycling factor (RRF) and EF-G. This is Ribosome-binding factor PSRP1, chloroplastic (PSRP1) from Spinacia oleracea (Spinach).